Consider the following 82-residue polypeptide: Putative membrane protein insertion efficiency factor (82 aa).

Belongs to the UPF0161 family.

Its subcellular location is the cell inner membrane. Functionally, could be involved in insertion of integral membrane proteins into the membrane. This chain is Putative membrane protein insertion efficiency factor, found in Colwellia psychrerythraea (strain 34H / ATCC BAA-681) (Vibrio psychroerythus).